A 209-amino-acid polypeptide reads, in one-letter code: Ribonuclease HII (209 aa).

One can recognise an RNase H type-2 domain in the interval 7–198 (GPVAGVDEAG…VAKAHQEWLH (192 aa)). A divalent metal cation-binding residues include Asp-13, Glu-14, and Asp-107.

It belongs to the RNase HII family. Mn(2+) serves as cofactor. It depends on Mg(2+) as a cofactor.

The protein resides in the cytoplasm. The catalysed reaction is Endonucleolytic cleavage to 5'-phosphomonoester.. Functionally, endonuclease that specifically degrades the RNA of RNA-DNA hybrids. In Corynebacterium glutamicum (strain ATCC 13032 / DSM 20300 / JCM 1318 / BCRC 11384 / CCUG 27702 / LMG 3730 / NBRC 12168 / NCIMB 10025 / NRRL B-2784 / 534), this protein is Ribonuclease HII.